Reading from the N-terminus, the 507-residue chain is Protein phosphatase 1J (507 aa).

2 disordered regions span residues 1-102 (MLNR…RLPW) and 197-220 (LCLPSTPGTPGAPSPSQLVSPQSC). The segment covering 14–23 (SSGGTSSQRS) has biased composition (low complexity). Thr-41 carries the post-translational modification Phosphothreonine. Residues 59–73 (TAETTVSFSRPTFLQ) show a composition bias toward polar residues. Phosphoserine occurs at positions 65 and 75. Positions 103 to 499 (STGYAEVINA…DDISVFVIPL (397 aa)) constitute a PPM-type phosphatase domain. The segment covering 199-212 (LPSTPGTPGAPSPS) has biased composition (low complexity).

Belongs to the PP2C family. Interacts with UBE2I/UBC9. As to expression, specifically expressed in the testicular germ cells.

It carries out the reaction O-phospho-L-seryl-[protein] + H2O = L-seryl-[protein] + phosphate. The enzyme catalyses O-phospho-L-threonyl-[protein] + H2O = L-threonyl-[protein] + phosphate. This chain is Protein phosphatase 1J (Ppm1j), found in Mus musculus (Mouse).